Here is a 651-residue protein sequence, read N- to C-terminus: Acetyl-coenzyme A synthetase (651 aa).

Residues 191–194 (RGGK), Thr-311, and Asn-335 contribute to the CoA site. Residues 387–389 (GEP), 411–416 (DTWWQT), Asp-500, and Arg-515 each bind ATP. Ser-523 is a CoA binding site. Arg-526 provides a ligand contact to ATP. Residues Val-537, His-539, and Val-542 each contribute to the Mg(2+) site. Residue Arg-584 coordinates CoA. Lys-609 is subject to N6-acetyllysine.

This sequence belongs to the ATP-dependent AMP-binding enzyme family. Requires Mg(2+) as cofactor. Acetylated. Deacetylation by the SIR2-homolog deacetylase activates the enzyme.

The enzyme catalyses acetate + ATP + CoA = acetyl-CoA + AMP + diphosphate. Its function is as follows. Catalyzes the conversion of acetate into acetyl-CoA (AcCoA), an essential intermediate at the junction of anabolic and catabolic pathways. AcsA undergoes a two-step reaction. In the first half reaction, AcsA combines acetate with ATP to form acetyl-adenylate (AcAMP) intermediate. In the second half reaction, it can then transfer the acetyl group from AcAMP to the sulfhydryl group of CoA, forming the product AcCoA. This is Acetyl-coenzyme A synthetase from Stutzerimonas stutzeri (strain A1501) (Pseudomonas stutzeri).